A 176-amino-acid chain; its full sequence is Ribosome maturation factor RimM (176 aa).

A PRC barrel domain is found at 93–170 (DGEYYHADLI…ELPTEIEGDT (78 aa)).

This sequence belongs to the RimM family. As to quaternary structure, binds ribosomal protein uS19.

It localises to the cytoplasm. Functionally, an accessory protein needed during the final step in the assembly of 30S ribosomal subunit, possibly for assembly of the head region. Essential for efficient processing of 16S rRNA. May be needed both before and after RbfA during the maturation of 16S rRNA. It has affinity for free ribosomal 30S subunits but not for 70S ribosomes. The sequence is that of Ribosome maturation factor RimM from Rhodopseudomonas palustris (strain BisB5).